Here is an 86-residue protein sequence, read N- to C-terminus: Anti-adapter protein IraP (86 aa).

The stretch at 1–36 (MKNLIAELLLKLAQKEEESKELCAQVEALEIIVTAM) forms a coiled coil.

The protein belongs to the IraP family. In terms of assembly, interacts with RssB.

It is found in the cytoplasm. Its function is as follows. Inhibits RpoS proteolysis by regulating RssB activity, thereby increasing the stability of the sigma stress factor RpoS especially during phosphate starvation, but also in stationary phase and during nitrogen starvation. Its effect on RpoS stability is due to its interaction with RssB, which probably blocks the interaction of RssB with RpoS, and the consequent delivery of the RssB-RpoS complex to the ClpXP protein degradation pathway. This chain is Anti-adapter protein IraP, found in Shigella boydii serotype 4 (strain Sb227).